Here is a 305-residue protein sequence, read N- to C-terminus: Serine/threonine-protein phosphatase PP-X isozyme 1 (305 aa).

4 residues coordinate Mn(2+): aspartate 51, histidine 53, aspartate 79, and asparagine 111. The active-site Proton donor is the histidine 112. Histidine 161 and histidine 236 together coordinate Mn(2+).

This sequence belongs to the PPP phosphatase family. PP-4 (PP-X) subfamily. In terms of assembly, interacts with TAP46. The cofactor is Mn(2+). In terms of tissue distribution, ubiquitous, mostly expressed in root mersitems, flowers, and vascular tissues.

The protein localises to the plastid stroma. It carries out the reaction O-phospho-L-seryl-[protein] + H2O = L-seryl-[protein] + phosphate. The enzyme catalyses O-phospho-L-threonyl-[protein] + H2O = L-threonyl-[protein] + phosphate. This is Serine/threonine-protein phosphatase PP-X isozyme 1 (PPX1) from Arabidopsis thaliana (Mouse-ear cress).